The sequence spans 410 residues: F-box/WD-40 repeat-containing protein 1 (410 aa).

The F-box domain occupies 32 to 79; the sequence is SKECSLLPFELFEEILCRVPTKSLLRLKLTCKRWLALFNDKRFIYKHL. WD repeat units lie at residues 109 to 150 and 269 to 309; these read PNKF…VRWI and DVHN…NGVS.

In Arabidopsis thaliana (Mouse-ear cress), this protein is F-box/WD-40 repeat-containing protein 1 (FBW1).